Reading from the N-terminus, the 344-residue chain is UDP-glycosyltransferase 73C4 (344 aa).

Residues Ser145, 202–203 (WA), 220–228 (HCGWNSSLE), and 242–245 (FAEQ) contribute to the UDP-alpha-D-glucose site.

It belongs to the UDP-glycosyltransferase family. As to expression, expressed in flowers and fruits.

It localises to the cytoplasm. Its subcellular location is the nucleus. Probable glucosyltransferase that cannot glycosylate abscisic acid (ABA) and auxin (IAA). The protein is UDP-glycosyltransferase 73C4 of Solanum lycopersicum (Tomato).